We begin with the raw amino-acid sequence, 99 residues long: UPF0213 protein spr1390 (99 aa).

A GIY-YIG domain is found at 3-78 (HKAYMYVLEC…KRKKRPQKEE (76 aa)).

Belongs to the UPF0213 family.

This Streptococcus pneumoniae (strain ATCC BAA-255 / R6) protein is UPF0213 protein spr1390.